The primary structure comprises 436 residues: ATP-dependent RNA helicase RhlB (436 aa).

The short motif at 9–37 (QKFADLDLLPQVIEGLEKKGFDYCTPIQA) is the Q motif element. The region spanning 40–219 (LPVLLTGQDI…FEHMHNPEHV (180 aa)) is the Helicase ATP-binding domain. An ATP-binding site is contributed by 53–60 (AQTGTGKT). A DEAD box motif is present at residues 165 to 168 (DEAD). In terms of domain architecture, Helicase C-terminal spans 245–390 (ALLQTLIEEE…MSDYDASALL (146 aa)). Positions 398–436 (RLRTRNPQQRRSNNNGPRNGNRKPNQNRRPRQPRHNKEA) are disordered. Low complexity predominate over residues 402-421 (RNPQQRRSNNNGPRNGNRKP). Positions 422-436 (NQNRRPRQPRHNKEA) are enriched in basic residues.

Belongs to the DEAD box helicase family. RhlB subfamily. As to quaternary structure, component of the RNA degradosome, which is a multiprotein complex involved in RNA processing and mRNA degradation.

The protein localises to the cytoplasm. The catalysed reaction is ATP + H2O = ADP + phosphate + H(+). Functionally, DEAD-box RNA helicase involved in RNA degradation. Has RNA-dependent ATPase activity and unwinds double-stranded RNA. This is ATP-dependent RNA helicase RhlB from Vibrio atlanticus (strain LGP32) (Vibrio splendidus (strain Mel32)).